Here is a 208-residue protein sequence, read N- to C-terminus: Outer-membrane lipoprotein carrier protein (208 aa).

Positions 1–22 are cleaved as a signal peptide; it reads MKKIFTIAALSLPLFCHLPAMA.

It belongs to the LolA family. As to quaternary structure, monomer.

It localises to the periplasm. Its function is as follows. Participates in the translocation of lipoproteins from the inner membrane to the outer membrane. Only forms a complex with a lipoprotein if the residue after the N-terminal Cys is not an aspartate (The Asp acts as a targeting signal to indicate that the lipoprotein should stay in the inner membrane). This chain is Outer-membrane lipoprotein carrier protein, found in Shewanella pealeana (strain ATCC 700345 / ANG-SQ1).